The primary structure comprises 530 residues: Metal transporter Nramp5 (530 aa).

The segment covering 1-10 (MTGSTVSRQE) has biased composition (polar residues). A disordered region spans residues 1 to 53 (MTGSTVSRQENSPKRPNDSNGEFKRLLVPETSQPEEDELHESPPENQILNVEE). The span at 11-27 (NSPKRPNDSNGEFKRLL) shows a compositional bias: basic and acidic residues. A run of 12 helical transmembrane segments spans residues 65–85 (FSWAKLWKFTGPGFLMSIAFL), 98–118 (AVAGYSLLWLLLWATLMGLLM), 147–167 (ILLWFMAEVALIGADIQEVIG), 179–199 (FLPIWVGVIITSFDCFLISYL), 207–227 (LEGLFAVLIATMALSFAWMFN), 253–273 (AVGVVGCVITPHNVFLHSALV), 299–319 (AALFVSFMINLFVTAVFAKGF), 341–361 (YGGGVFPILYIWGIGLLAAGQ), 387–407 (LSAFITRSFAIVPTMFVAIMF), 429–449 (IPFAVIPLLTMVSNEHIMGVF), 458–478 (LAWTVAVFVMMINGYLLLDFF), and 485–505 (FLVGFLVFGGVVGYISFIIYL).

Belongs to the NRAMP (TC 2.A.55) family.

Its subcellular location is the membrane. In terms of biological role, seems to be involved in iron uptake. The chain is Metal transporter Nramp5 (NRAMP5) from Arabidopsis thaliana (Mouse-ear cress).